We begin with the raw amino-acid sequence, 278 residues long: MYLRKALIAGGSAAAAAAAILGAAAVGKSKGGPDLDILSVVPAATGQWDRNWDRREPISMVNLSKINGETGEEELQLHLNKHKPKATRHIFLIRHSQYKQDGKTDFDRVLTPLGREQADLTGKRLSSLGFKYNHIVYSTMTRAKETTEIISKYLPDVKKSSSDLLREGAPIRPEPQVCHWKPDFVYYEDGSRIEAAFRHFIHRADPKQEADSYEILICHANVIRYIVCRALQLPPEAWLRMFLNNGSISYLVIRPNGNVSLRMLGDSGFMPPEKISRT.

Residues leucine 7–glycine 27 traverse the membrane as a helical segment.

This sequence belongs to the phosphoglycerate mutase family. BPG-dependent PGAM subfamily. Phosphorylated by the RIPK1/RIPK3 complex under necrotic conditions. This phosphorylation increases PGAM5 phosphatase activity.

Its subcellular location is the mitochondrion outer membrane. The enzyme catalyses O-phospho-L-seryl-[protein] + H2O = L-seryl-[protein] + phosphate. It carries out the reaction O-phospho-L-threonyl-[protein] + H2O = L-threonyl-[protein] + phosphate. Displays phosphatase activity for serine/threonine residues. Has apparently no phosphoglycerate mutase activity. May be regulator of mitochondrial dynamics. May be a central mediator for programmed necrosis. The chain is Serine/threonine-protein phosphatase PGAM5, mitochondrial (pgam5) from Xenopus tropicalis (Western clawed frog).